Consider the following 98-residue polypeptide: Large ribosomal subunit protein uL23 (98 aa).

This sequence belongs to the universal ribosomal protein uL23 family. Part of the 50S ribosomal subunit. Contacts protein L29, and trigger factor when it is bound to the ribosome.

In terms of biological role, one of the early assembly proteins it binds 23S rRNA. One of the proteins that surrounds the polypeptide exit tunnel on the outside of the ribosome. Forms the main docking site for trigger factor binding to the ribosome. This chain is Large ribosomal subunit protein uL23, found in Frankia alni (strain DSM 45986 / CECT 9034 / ACN14a).